We begin with the raw amino-acid sequence, 464 residues long: Glutamate--tRNA ligase (464 aa).

A 'HIGH' region motif is present at residues 9–19 (PSPTGYLHIGG). A 'KMSKS' region motif is present at residues 242–246 (KISKR). K245 serves as a coordination point for ATP.

Belongs to the class-I aminoacyl-tRNA synthetase family. Glutamate--tRNA ligase type 1 subfamily. In terms of assembly, monomer.

The protein resides in the cytoplasm. The catalysed reaction is tRNA(Glu) + L-glutamate + ATP = L-glutamyl-tRNA(Glu) + AMP + diphosphate. In terms of biological role, catalyzes the attachment of glutamate to tRNA(Glu) in a two-step reaction: glutamate is first activated by ATP to form Glu-AMP and then transferred to the acceptor end of tRNA(Glu). The sequence is that of Glutamate--tRNA ligase from Neisseria meningitidis serogroup C / serotype 2a (strain ATCC 700532 / DSM 15464 / FAM18).